The sequence spans 141 residues: Protein X (141 aa).

Residues 24–48 (QSSGPPFPRPSAGSAASPASSLSAS) are compositionally biased toward low complexity. Residues 24-51 (QSSGPPFPRPSAGSAASPASSLSASDES) form a disordered region. Residues 68–113 (PCCLVVTCAELRTMDSTVNFVSWHANRQLGMPSKDLWTPYIRDQLL) form a mitochondrial targeting sequence region.

The protein belongs to the orthohepadnavirus protein X family. May form homodimer. May interact with host CEBPA, CFLAR, CREB1, DDB1, E4F1, HBXIP, HSPD1/HSP60, NFKBIA, POLR2E and SMAD4. Interacts with host SMC5-SMC6 complex and induces its degradation. Interacts with host TRPC4AP; leading to prevent ubiquitination of TRPC4AP. Interacts with host PLSCR1; this interaction promotes ubiquitination and degradation of HBx and impairs HBx-mediated cell proliferation. In terms of processing, a fraction may be phosphorylated in insect cells and HepG2 cells, a human hepatoblastoma cell line. Phosphorylated in vitro by host protein kinase C or mitogen-activated protein kinase. N-acetylated in insect cells.

Its subcellular location is the host cytoplasm. It is found in the host nucleus. The protein resides in the host mitochondrion. Functionally, multifunctional protein that plays a role in silencing host antiviral defenses and promoting viral transcription. Does not seem to be essential for HBV infection. May be directly involved in development of cirrhosis and liver cancer (hepatocellular carcinoma). Most of cytosolic activities involve modulation of cytosolic calcium. The effect on apoptosis is controversial depending on the cell types in which the studies have been conducted. May induce apoptosis by localizing in mitochondria and causing loss of mitochondrial membrane potential. May also modulate apoptosis by binding host CFLAR, a key regulator of the death-inducing signaling complex (DISC). Promotes viral transcription by using the host E3 ubiquitin ligase DDB1 to target the SMC5-SMC6 complex to proteasomal degradation. This host complex would otherwise bind to viral episomal DNA, and prevents its transcription. Moderately stimulates transcription of many different viral and cellular transcription elements. Promoters and enhancers stimulated by HBx contain DNA binding sites for NF-kappa-B, AP-1, AP-2, c-EBP, ATF/CREB, or the calcium-activated factor NF-AT. The protein is Protein X of Woodchuck hepatitis B virus (isolate 1) (WHV).